A 560-amino-acid polypeptide reads, in one-letter code: Phenol regulator MopR (560 aa).

Phenol contacts are provided by H106 and W134. Positions 155, 178, 181, and 189 each coordinate Zn(2+). Residues 245–474 form the Sigma-54 factor interaction domain; the sequence is AVGESVAYRK…LENLLERATL (230 aa). ATP-binding positions include 273 to 280 and 336 to 345; these read GETGVGKE and AHGGTIFLDE.

Homodimer.

With respect to regulation, activity is triggered by phenol binding. Its function is as follows. Involved in the regulation of the phenol degradation pathway. Activates phenol hydroxylase expression in the presence of phenol. This is Phenol regulator MopR from Acinetobacter guillouiae (Acinetobacter genomosp. 11).